We begin with the raw amino-acid sequence, 218 residues long: 7-cyano-7-deazaguanine synthase (218 aa).

10 to 20 serves as a coordination point for ATP; the sequence is FSGGQDSTTCL. Zn(2+)-binding residues include C186, C195, C198, and C201.

It belongs to the QueC family. Homodimer. The cofactor is Zn(2+).

It catalyses the reaction 7-carboxy-7-deazaguanine + NH4(+) + ATP = 7-cyano-7-deazaguanine + ADP + phosphate + H2O + H(+). Its pathway is purine metabolism; 7-cyano-7-deazaguanine biosynthesis. Catalyzes the ATP-dependent conversion of 7-carboxy-7-deazaguanine (CDG) to 7-cyano-7-deazaguanine (preQ(0)). The polypeptide is 7-cyano-7-deazaguanine synthase (Exiguobacterium sibiricum (strain DSM 17290 / CCUG 55495 / CIP 109462 / JCM 13490 / 255-15)).